The chain runs to 243 residues: tRNA pseudouridine synthase A (243 aa).

The Nucleophile role is filled by Asp54. Tyr112 contributes to the substrate binding site.

This sequence belongs to the tRNA pseudouridine synthase TruA family. As to quaternary structure, homodimer.

The catalysed reaction is uridine(38/39/40) in tRNA = pseudouridine(38/39/40) in tRNA. In terms of biological role, formation of pseudouridine at positions 38, 39 and 40 in the anticodon stem and loop of transfer RNAs. The polypeptide is tRNA pseudouridine synthase A (Aster yellows witches'-broom phytoplasma (strain AYWB)).